The following is a 1813-amino-acid chain: Nonribosomal peptide synthetase 1 (1813 aa).

The adenylation stretch occupies residues 89–494 (EKARRDPSRQ…GRGDQQVKLR (406 aa)). Residues 624 to 699 (EPQSERERQL…ELAITLKHSD (76 aa)) enclose the Carrier 1 domain. An O-(pantetheine 4'-phosphoryl)serine modification is found at serine 660. Residues 738 to 1159 (DVYPCTTLQE…LPMTDDELAE (422 aa)) are condensation 1. One can recognise a Carrier 2 domain in the interval 1282-1358 (QVTTPKQQKL…DMADIAKESL (77 aa)). An O-(pantetheine 4'-phosphoryl)serine modification is found at serine 1319. Positions 1427 to 1806 (FYLDAAVDQS…STLFQTDVME (380 aa)) are condensation 2.

This sequence belongs to the NRP synthetase family.

Its pathway is siderophore biosynthesis. Nonribosomal peptide synthetase; part of the gene cluster that mediates the biosynthesis of hydroxamate-containing siderophores that play a critical role in virulence via intracellular iron acquisition during macrophage infection. In Ajellomyces capsulatus (Darling's disease fungus), this protein is Nonribosomal peptide synthetase 1.